The following is a 108-amino-acid chain: Ig kappa chain V-V region HP 93G7 (108 aa).

Residues 1–23 form a framework-1 region; it reads DIQMTQTTSSLSASLGDRVTISC. The cysteines at positions 23 and 88 are disulfide-linked. Residues 24–34 form a complementarity-determining-1 region; it reads RASQDISNYLN. The tract at residues 35–49 is framework-2; it reads WYQQKPDGTVKLLIY. A complementarity-determining-2 region spans residues 50–56; sequence YTSRLHS. The interval 57 to 88 is framework-3; the sequence is GVPSRFSGSGSGTDYSLTISNLEQEDIATYFC. A complementarity-determining-3 region spans residues 89-97; that stretch reads QQGNMLPRT. Residues 98–108 are framework-4; sequence FGGGTKLEIKR.

The polypeptide is Ig kappa chain V-V region HP 93G7 (Mus musculus (Mouse)).